Consider the following 382-residue polypeptide: Alkane 1-monooxygenase 2 (382 aa).

A run of 4 helical transmembrane segments spans residues 17-37 (GYLA…FVGV), 45-65 (WAWF…YLVG), 88-108 (VSAI…GHIF), and 114-134 (GLLG…IIAI). 5 residues coordinate Fe cation: His-138, His-142, His-168, His-172, and His-173. Residues 236-256 (ALFAATFGLLWGWQGVVFFLG) traverse the membrane as a helical segment. Residues His-312, His-315, and His-316 each contribute to the Fe cation site.

Belongs to the fatty acid desaturase type 1 family. AlkB subfamily. Requires Fe(3+) as cofactor.

Its subcellular location is the cell inner membrane. The catalysed reaction is octane + 2 reduced [rubredoxin] + O2 + 2 H(+) = 2 oxidized [rubredoxin] + octan-1-ol + H2O. Its pathway is hydrocarbon metabolism; alkane degradation. In terms of biological role, catalyzes the hydroxylation of n-alkanes in the presence of a NADH-rubredoxin reductase and rubredoxin. It preferably hydroxylases C8-C16 hydrocarbons. The chain is Alkane 1-monooxygenase 2 (alkB2) from Alcanivorax borkumensis (strain ATCC 700651 / DSM 11573 / NCIMB 13689 / SK2).